The following is a 310-amino-acid chain: Porphobilinogen deaminase (310 aa).

Cysteine 243 is subject to S-(dipyrrolylmethanemethyl)cysteine.

It belongs to the HMBS family. Monomer. Requires dipyrromethane as cofactor.

It catalyses the reaction 4 porphobilinogen + H2O = hydroxymethylbilane + 4 NH4(+). The protein operates within porphyrin-containing compound metabolism; protoporphyrin-IX biosynthesis; coproporphyrinogen-III from 5-aminolevulinate: step 2/4. Its function is as follows. Tetrapolymerization of the monopyrrole PBG into the hydroxymethylbilane pre-uroporphyrinogen in several discrete steps. The polypeptide is Porphobilinogen deaminase (Mannheimia succiniciproducens (strain KCTC 0769BP / MBEL55E)).